The primary structure comprises 117 residues: Cliotide T9 (117 aa).

Positions 1-25 (MAYVRLACLAVIFFFAASVMFTVEA) are cleaved as a signal peptide. Positions 26-55 (GIPCGESCVFIPCLTTVVGCSCKNKVCYNN) form a cross-link, cyclopeptide (Gly-Asn). Intrachain disulfides connect C29-C45, C33-C47, and C38-C52. Residues 56 to 117 (HVIAAEANSI…YLLKDFLKMP (62 aa)) constitute a propeptide, removed in mature form.

Contains 3 disulfide bonds. Post-translationally, this is a cyclic peptide. In terms of tissue distribution, expressed in seed but not in root, nodule, flower, stem, shoot, leaf and pod (at protein level).

Its function is as follows. Probably participates in a plant defense mechanism. The protein is Cliotide T9 of Clitoria ternatea (Butterfly pea).